The primary structure comprises 1150 residues: BAI1-associated protein 3 (1150 aa).

The interval 22 to 44 (RRKTEQEPEVTNSQEPPTGAWKP) is disordered. Positions 139–298 (SSEEHMEAIM…VKSARANGTA (160 aa)) constitute a C2 1 domain. Ca(2+)-binding residues include D174 and D180. The tract at residues 193 to 214 (APQEPSGQKEQRFGFRKGSKRS) is disordered. Ca(2+) contacts are provided by D258 and D260. In terms of domain architecture, MHD1 spans 626–747 (FELYLTLADT…EASLFYTELL (122 aa)). In terms of domain architecture, MHD2 spans 851 to 959 (DEAVAPLLKY…CSTRECIEQF (109 aa)). Residues 973–1099 (RFGRLTVRCH…GIARPHVGGG (127 aa)) form the C2 2 domain. 7 residues coordinate Ca(2+): L1003, D1004, D1010, D1068, D1070, S1073, and D1076.

It belongs to the unc-13 family. Interacts with ADGRB1, this interaction is direct. Interacts with endosomal SNARE proteins VAMP3, VAMP4, STX6 and STX16; this interaction is increased in the presence of calcium. Requires Ca(2+) as cofactor. Prominently expressed in brain structures including hypothalamus, amygdala, stria terminalis and periaqueductal gray (at protein level). Expressed in nonneuronal tissues, including placenta, lung, pancreas, spleen, and testes. Within placenta, expression is restricted to the syncytiotrophoblasts.

It localises to the cytoplasm. Its subcellular location is the cytosol. It is found in the recycling endosome membrane. The protein resides in the late endosome membrane. The protein localises to the golgi apparatus. It localises to the trans-Golgi network membrane. Its subcellular location is the cell membrane. Functions in endosome to Golgi retrograde transport. In response to calcium influx, may interact with SNARE fusion receptors and membrane phospholipids to mediate endosome fusion with the trans-Golgi network. By promoting the recycling of secretory vesicle transmembrane proteins, it indirectly controls dense-core secretory vesicle biogenesis, maturation and their ability to mediate the constitutive and regulated secretion of neurotransmitters and hormones. May regulate behavior and food intake by controlling calcium-stimulated exocytosis of neurotransmitters including NPY and serotonin and hormones like insulin. Proposed to play a role in hypothalamic neuronal firing by modulating gamma-aminobutyric acid (GABA)ergic inhibitory neurotransmission. The chain is BAI1-associated protein 3 from Mus musculus (Mouse).